The following is a 299-amino-acid chain: MAWRKLGRIFAPSGELDWSRSHAALPVPEWIEGDIFRIYFSGRDGQNRSSIGSVIVDLAVGGKILDIPAEPILRPGARGMFDDCGVSIGSIVRAGDTRLLYYTGWNLAVTVPWKNTIGVAISEAGAPFERWSTFPVVALDERDPFSLSYPWVIQDGGTYRMWYGSNLGWGEGTDEIPHVIRYAQSRDGVHWEKQDRVHIDTSGSDNSAACRPYVVRDAGVYRMWFCARGAKYRIYCATSEDGLTWRQLGKDEGIDVSPDSWDSDMIEYPCVFDHRGQRFMLYSGDGYGRTGFGLAVLEN.

This is an uncharacterized protein from Mycobacterium tuberculosis (strain ATCC 25618 / H37Rv).